Reading from the N-terminus, the 243-residue chain is NAD-dependent protein deacetylase (243 aa).

The Deacetylase sirtuin-type domain occupies 1–243 (MKHDLETLKH…VSVVKSLMTE (243 aa)). Residues alanine 24, phenylalanine 35, arginine 36, glutamine 105, isoleucine 107, aspartate 108, and histidine 123 each contribute to the NAD(+) site. Phenylalanine 35 is a binding site for nicotinamide. Nicotinamide contacts are provided by isoleucine 107 and aspartate 108. The Proton acceptor role is filled by histidine 123. Zn(2+)-binding residues include cysteine 131, cysteine 134, cysteine 151, and cysteine 154. 4 residues coordinate NAD(+): serine 192, serine 193, asparagine 215, and aspartate 232.

The protein belongs to the sirtuin family. Class U subfamily. It depends on Zn(2+) as a cofactor.

The protein localises to the cytoplasm. It carries out the reaction N(6)-acetyl-L-lysyl-[protein] + NAD(+) + H2O = 2''-O-acetyl-ADP-D-ribose + nicotinamide + L-lysyl-[protein]. Its function is as follows. NAD-dependent protein deacetylase which modulates the activities of several enzymes which are inactive in their acetylated form. The polypeptide is NAD-dependent protein deacetylase (Staphylococcus aureus (strain NCTC 8325 / PS 47)).